The chain runs to 394 residues: Carbamoyl phosphate synthase small chain (394 aa).

The tract at residues 1 to 188 is CPSase; the sequence is MIRKERAILA…ALPYAFPTLR (188 aa). L-glutamine-binding residues include S49, G240, and G242. The 188-residue stretch at 192–379 folds into the Glutamine amidotransferase type-1 domain; that stretch reads RVVLMDFGIK…IEEIDAFDGG (188 aa). Residue C267 is the Nucleophile of the active site. L-glutamine-binding residues include L268, Q271, N309, G311, and Y312. Active-site residues include H352 and E354.

Belongs to the CarA family. In terms of assembly, composed of two chains; the small (or glutamine) chain promotes the hydrolysis of glutamine to ammonia, which is used by the large (or ammonia) chain to synthesize carbamoyl phosphate. Tetramer of heterodimers (alpha,beta)4.

The enzyme catalyses hydrogencarbonate + L-glutamine + 2 ATP + H2O = carbamoyl phosphate + L-glutamate + 2 ADP + phosphate + 2 H(+). It catalyses the reaction L-glutamine + H2O = L-glutamate + NH4(+). It participates in amino-acid biosynthesis; L-arginine biosynthesis; carbamoyl phosphate from bicarbonate: step 1/1. The protein operates within pyrimidine metabolism; UMP biosynthesis via de novo pathway; (S)-dihydroorotate from bicarbonate: step 1/3. In terms of biological role, small subunit of the glutamine-dependent carbamoyl phosphate synthetase (CPSase). CPSase catalyzes the formation of carbamoyl phosphate from the ammonia moiety of glutamine, carbonate, and phosphate donated by ATP, constituting the first step of 2 biosynthetic pathways, one leading to arginine and/or urea and the other to pyrimidine nucleotides. The small subunit (glutamine amidotransferase) binds and cleaves glutamine to supply the large subunit with the substrate ammonia. The sequence is that of Carbamoyl phosphate synthase small chain from Deinococcus radiodurans (strain ATCC 13939 / DSM 20539 / JCM 16871 / CCUG 27074 / LMG 4051 / NBRC 15346 / NCIMB 9279 / VKM B-1422 / R1).